A 444-amino-acid chain; its full sequence is Ribosome biogenesis protein YTM1 (444 aa).

Residues 8–89 (VKLRFFTREE…ETFLNVEYTR (82 aa)) are ubiquitin-like (UBL) domain. 7 WD repeats span residues 99 to 138 (SFDN…EKQY), 140 to 178 (GHSG…LKSI), 194 to 231 (GHKA…MTVI), 269 to 309 (SHSA…CVDT), 311 to 350 (TTSY…SSKI), 357 to 397 (GHKN…AMYT), and 408 to 444 (GVND…IFSN). The segment at 99 to 444 (SFDNEDWVSS…INKGDNIFSN (346 aa)) is sufficient for interaction with ERB1 and association with 66S pre-ribosomes.

It belongs to the WD repeat WDR12/YTM1 family. As to quaternary structure, component of the NOP7 complex, composed of ERB1, NOP7 and YTM1. The complex is held together by ERB1, which interacts with NOP7 via its N-terminal domain and with YTM1 via a high-affinity interaction between the seven-bladed beta-propeller domains of the 2 proteins. The NOP7 complex associates with the 66S pre-ribosome. Interacts (via UBL domain) with MDN1 (via VWFA/MIDAS domain).

The protein resides in the nucleus. The protein localises to the nucleolus. It localises to the nucleoplasm. Its function is as follows. Component of the NOP7 complex, which is required for maturation of the 25S and 5.8S ribosomal RNAs and formation of the 60S ribosome. The polypeptide is Ribosome biogenesis protein YTM1 (Kluyveromyces lactis (strain ATCC 8585 / CBS 2359 / DSM 70799 / NBRC 1267 / NRRL Y-1140 / WM37) (Yeast)).